Reading from the N-terminus, the 214-residue chain is Oocyte zinc finger protein XlCOF10 (214 aa).

7 consecutive C2H2-type zinc fingers follow at residues 1-23, 29-51, 57-79, 85-107, 113-135, 141-163, and 169-191; these read FSCS…RQLH, FTCS…HRIH, FTCD…QKSH, FCCS…QRTH, FTCT…QKSH, FSCS…QRIH, and FSCS…EKCH.

The protein belongs to the krueppel C2H2-type zinc-finger protein family.

The protein localises to the nucleus. May be involved in transcriptional regulation. This chain is Oocyte zinc finger protein XlCOF10, found in Xenopus laevis (African clawed frog).